Reading from the N-terminus, the 101-residue chain is NADH-quinone oxidoreductase subunit K (101 aa).

The next 3 membrane-spanning stretches (helical) occupy residues L4–L24, I29–A49, and I61–L81.

The protein belongs to the complex I subunit 4L family. As to quaternary structure, NDH-1 is composed of 14 different subunits. Subunits NuoA, H, J, K, L, M, N constitute the membrane sector of the complex.

It localises to the cell inner membrane. It catalyses the reaction a quinone + NADH + 5 H(+)(in) = a quinol + NAD(+) + 4 H(+)(out). In terms of biological role, NDH-1 shuttles electrons from NADH, via FMN and iron-sulfur (Fe-S) centers, to quinones in the respiratory chain. The immediate electron acceptor for the enzyme in this species is believed to be ubiquinone. Couples the redox reaction to proton translocation (for every two electrons transferred, four hydrogen ions are translocated across the cytoplasmic membrane), and thus conserves the redox energy in a proton gradient. In Burkholderia vietnamiensis (strain G4 / LMG 22486) (Burkholderia cepacia (strain R1808)), this protein is NADH-quinone oxidoreductase subunit K.